The sequence spans 919 residues: Isoleucine--tRNA ligase (919 aa).

The 'HIGH' region motif lies at 57 to 67 (PYANGHTHIGH). Glu569 contacts L-isoleucyl-5'-AMP. Residues 610-614 (KMSKS) carry the 'KMSKS' region motif. Residue Lys613 coordinates ATP. Zn(2+)-binding residues include Cys895, Cys898, Cys910, and Cys913.

This sequence belongs to the class-I aminoacyl-tRNA synthetase family. IleS type 1 subfamily. Monomer. Zn(2+) is required as a cofactor.

The protein resides in the cytoplasm. It carries out the reaction tRNA(Ile) + L-isoleucine + ATP = L-isoleucyl-tRNA(Ile) + AMP + diphosphate. Catalyzes the attachment of isoleucine to tRNA(Ile). As IleRS can inadvertently accommodate and process structurally similar amino acids such as valine, to avoid such errors it has two additional distinct tRNA(Ile)-dependent editing activities. One activity is designated as 'pretransfer' editing and involves the hydrolysis of activated Val-AMP. The other activity is designated 'posttransfer' editing and involves deacylation of mischarged Val-tRNA(Ile). This Sulfurimonas denitrificans (strain ATCC 33889 / DSM 1251) (Thiomicrospira denitrificans (strain ATCC 33889 / DSM 1251)) protein is Isoleucine--tRNA ligase.